The following is a 276-amino-acid chain: Undecaprenyl-diphosphatase (276 aa).

Transmembrane regions (helical) follow at residues 42–62 (AVTAFTAVIQMGAILAAIVYF), 88–108 (ALLGWYVIAGTIPIGLAGYLG), 116–136 (LRSLWYVVAGLVLWSIAIVYA), 149–169 (MRLPDAVFIGVIQVLALVPGV), 187–207 (VAATRFSFLLAIPALLAAGIF), 222–242 (SLVVGTGMAFLTAYASIAWLL), and 253–273 (FVWYRVTVAVFVVAALTTGLV).

Belongs to the UppP family.

The protein localises to the cell membrane. It carries out the reaction di-trans,octa-cis-undecaprenyl diphosphate + H2O = di-trans,octa-cis-undecaprenyl phosphate + phosphate + H(+). Functionally, catalyzes the dephosphorylation of undecaprenyl diphosphate (UPP). Confers resistance to bacitracin. The protein is Undecaprenyl-diphosphatase of Acidothermus cellulolyticus (strain ATCC 43068 / DSM 8971 / 11B).